We begin with the raw amino-acid sequence, 4004 residues long: Hybrid PKS-NRPS synthetase mpsA (4004 aa).

Residues 5–438 (NEPIAVIGSA…GANAHAILES (434 aa)) enclose the Ketosynthase family 3 (KS3) domain. Active-site for beta-ketoacyl synthase activity residues include Cys178, His317, and His358. One can recognise a Malonyl-CoA:ACP transacylase (MAT) domain in the interval 544 to 867 (VFTGQGAQWP…RGGDDVNAFS (324 aa)). The segment at 933 to 1066 (HPILGVKSIE…GTISITLGIP (134 aa)) is N-terminal hotdog fold. Residues 933–1233 (HPILGVKSIE…SMVPFSNATA (301 aa)) are dehydratase (DH) domain. The PKS/mFAS DH domain occupies 933-1234 (HPILGVKSIE…MVPFSNATAE (302 aa)). The Proton acceptor; for dehydratase activity role is filled by His966. The tract at residues 1081 to 1234 (MVDVEVDRFY…MVPFSNATAE (154 aa)) is C-terminal hotdog fold. The active-site Proton donor; for dehydratase activity is Asp1141. A methyltransferase (MT) domain region spans residues 1289 to 1575 (EEEEQTLIHY…DTYAPNFDSL (287 aa)). The Ketoreductase (KR) domain maps to 2102–2272 (TYFMVGLSGE…RRGLAASILG (171 aa)). A Carrier 1 domain is found at 2384 to 2462 (EVVEIMQAGF…DLLNDALDRL (79 aa)). O-(pantetheine 4'-phosphoryl)serine is present on Ser2422. Residues 2471–2540 (GADPSSVSRP…ERRAAELARK (70 aa)) form a disordered region. The segment covering 2488-2500 (PSVSRPASNAPPV) has biased composition (low complexity). Residues 2514 to 2540 (LKAEREREAEAKRKREEERRAAELARK) show a composition bias toward basic and acidic residues. The segment at 2584–3019 (PMSFGQSRFW…RQCAERPGRE (436 aa)) is condensation (C) domain. The adenylation (A) (KR) domain stretch occupies residues 3060 to 3459 (KRHTASLAIK…GRIEGDTQIK (400 aa)). The 78-residue stretch at 3570–3647 (ANLTPTESRL…GMARAIDDAT (78 aa)) folds into the Carrier 2 domain. Ser3607 carries the O-(pantetheine 4'-phosphoryl)serine modification. Residues 3694–3924 (LTIVLTGATG…VVEGVAQALF (231 aa)) form a reductase (RED) domain region.

It in the C-terminal section; belongs to the NRP synthetase family. Pantetheine 4'-phosphate is required as a cofactor.

It functions in the pathway secondary metabolite biosynthesis. Its function is as follows. Hybrid PKS-NRPS synthetase; part of the gene cluster that mediates the biosynthesis of macrophasetins, 3-decalinoyltetramic acids (DTAs) which feature a tetramate (pyrrolidine-2,4-dione) unit connected to a decalin fragment and that have potent bioactivities. The PKS-NRPS mpsA together with its associated enoylreductase partner mpsG incorporate one unit of acetyl-CoA, seven units of malonyl-CoA, and one unit of L-alanine to assemble the linear tetramic acid intermediate corresponding to the backbone of macrophasetins. Without the Diels-Alderase mpsD, the mpsA/G product can undergo the non-enzymatic intramolecular Diels-Alder (IMDA) reaction to generate both macrophasetin A and macrophasetin B. Catalyzed by mpsD, the linear tetramic acid intermediate is thoroughly converted to macrophasetin A via the endo-IMDA reaction in a regioselective and stereoselective manner. Finally, the cytochrome P450 monooxygenase mpsF catalyzes the hydroxylation at C20 to yield the end product macrophasetin C. The polypeptide is Hybrid PKS-NRPS synthetase mpsA (Macrophomina phaseolina (strain MS6) (Charcoal rot fungus)).